A 730-amino-acid polypeptide reads, in one-letter code: Neuroligin-like protein glit-1 (730 aa).

The N-terminal stretch at 1–18 is a signal peptide; sequence MFTGTIFNSLFTLPLVIS. Residues 19-663 lie on the Extracellular side of the membrane; the sequence is QFVPPPTRPV…EIMVFKWITG (645 aa). 7 N-linked (GlcNAc...) asparagine glycosylation sites follow: Asn-103, Asn-320, Asn-445, Asn-512, Asn-557, Asn-564, and Asn-604. The chain crosses the membrane as a helical span at residues 664–684; sequence VNVIIIALLIVLAGAFGYMVW. At 685–730 the chain is on the cytoplasmic side; that stretch reads GNKEDEEAAYKAENHQLVEYRDTGHSVSDATISSRTRSPRSRITNL.

It belongs to the type-B carboxylesterase/lipase family. Expressed in the pharynx, intestine, and in several cells in the head including dopaminergic neurons.

Its subcellular location is the cell membrane. Its function is as follows. Probable neuronal cell surface protein thought to be involved in cell-cell-interactions. Confers protection against oxidative stress. Plays a role in protecting dopaminergic neurons against oxidative stress-induced neurodegeneration. This chain is Neuroligin-like protein glit-1, found in Caenorhabditis elegans.